We begin with the raw amino-acid sequence, 484 residues long: tRNA sulfurtransferase (484 aa).

Residues arginine 63–glutamine 167 enclose the THUMP domain. ATP is bound by residues leucine 185–methionine 186, lysine 267, glycine 289, and glutamine 298. A disulfide bridge links cysteine 346 with cysteine 457. A Rhodanese domain is found at alanine 405–proline 483. Cysteine 457 (cysteine persulfide intermediate) is an active-site residue.

This sequence belongs to the ThiI family.

The protein resides in the cytoplasm. The enzyme catalyses [ThiI sulfur-carrier protein]-S-sulfanyl-L-cysteine + a uridine in tRNA + 2 reduced [2Fe-2S]-[ferredoxin] + ATP + H(+) = [ThiI sulfur-carrier protein]-L-cysteine + a 4-thiouridine in tRNA + 2 oxidized [2Fe-2S]-[ferredoxin] + AMP + diphosphate. It carries out the reaction [ThiS sulfur-carrier protein]-C-terminal Gly-Gly-AMP + S-sulfanyl-L-cysteinyl-[cysteine desulfurase] + AH2 = [ThiS sulfur-carrier protein]-C-terminal-Gly-aminoethanethioate + L-cysteinyl-[cysteine desulfurase] + A + AMP + 2 H(+). The protein operates within cofactor biosynthesis; thiamine diphosphate biosynthesis. In terms of biological role, catalyzes the ATP-dependent transfer of a sulfur to tRNA to produce 4-thiouridine in position 8 of tRNAs, which functions as a near-UV photosensor. Also catalyzes the transfer of sulfur to the sulfur carrier protein ThiS, forming ThiS-thiocarboxylate. This is a step in the synthesis of thiazole, in the thiamine biosynthesis pathway. The sulfur is donated as persulfide by IscS. This chain is tRNA sulfurtransferase, found in Azotobacter vinelandii (strain DJ / ATCC BAA-1303).